The following is a 256-amino-acid chain: Protein LIKE COV 1 (256 aa).

The span at 1-10 (MANRERDREL) shows a compositional bias: basic and acidic residues. Residues 1-39 (MANRERDRELLIPVADFGDKDDGSSSKPSSSSSASSSHQ) form a disordered region. Over 1-60 (MANRERDRELLIPVADFGDKDDGSSSKPSSSSSASSSHQSGHETLSLFIRGWASKKFMTG) the chain is Cytoplasmic. Residues 25-39 (SSKPSSSSSASSSHQ) show a composition bias toward low complexity. The chain crosses the membrane as a helical span at residues 61–81 (CVILLPIAVTFYTTWWFIHFV). The Extracellular segment spans residues 82–93 (DGFFSPIYALLG). A helical transmembrane segment spans residues 94–114 (INIFGFGFLTSIAFIFLVGVF). Residues 115–256 (MSSWLGASVL…KPLASIGNES (142 aa)) are Cytoplasmic-facing.

This sequence belongs to the plant COV1 protein family. Expressed at low levels in flowers, stems, roots and leaves.

It localises to the membrane. This chain is Protein LIKE COV 1, found in Arabidopsis thaliana (Mouse-ear cress).